The following is a 123-amino-acid chain: Holo-[acyl-carrier-protein] synthase (123 aa).

Mg(2+)-binding residues include Asp8 and Glu56.

Belongs to the P-Pant transferase superfamily. AcpS family. It depends on Mg(2+) as a cofactor.

The protein localises to the cytoplasm. It carries out the reaction apo-[ACP] + CoA = holo-[ACP] + adenosine 3',5'-bisphosphate + H(+). Its function is as follows. Transfers the 4'-phosphopantetheine moiety from coenzyme A to a Ser of acyl-carrier-protein. In Treponema denticola (strain ATCC 35405 / DSM 14222 / CIP 103919 / JCM 8153 / KCTC 15104), this protein is Holo-[acyl-carrier-protein] synthase.